The primary structure comprises 133 residues: Large ribosomal subunit protein uL22 (133 aa).

Belongs to the universal ribosomal protein uL22 family. In terms of assembly, part of the 50S ribosomal subunit.

In terms of biological role, this protein binds specifically to 23S rRNA; its binding is stimulated by other ribosomal proteins, e.g. L4, L17, and L20. It is important during the early stages of 50S assembly. It makes multiple contacts with different domains of the 23S rRNA in the assembled 50S subunit and ribosome. Its function is as follows. The globular domain of the protein is located near the polypeptide exit tunnel on the outside of the subunit, while an extended beta-hairpin is found that lines the wall of the exit tunnel in the center of the 70S ribosome. In Granulibacter bethesdensis (strain ATCC BAA-1260 / CGDNIH1), this protein is Large ribosomal subunit protein uL22.